The following is a 67-amino-acid chain: ATP synthase F(0) complex subunit 8 (67 aa).

A helical membrane pass occupies residues 8 to 24 (TWFINIVSMILTLFIVF). An N6-acetyllysine; alternate modification is found at K54. Residue K54 is modified to N6-succinyllysine; alternate. Residue K57 is modified to N6-acetyllysine.

This sequence belongs to the ATPase protein 8 family. Component of the ATP synthase complex composed at least of ATP5F1A/subunit alpha, ATP5F1B/subunit beta, ATP5MC1/subunit c (homooctomer), MT-ATP6/subunit a, MT-ATP8/subunit 8, ATP5ME/subunit e, ATP5MF/subunit f, ATP5MG/subunit g, ATP5MK/subunit k, ATP5MJ/subunit j, ATP5F1C/subunit gamma, ATP5F1D/subunit delta, ATP5F1E/subunit epsilon, ATP5PF/subunit F6, ATP5PB/subunit b, ATP5PD/subunit d, ATP5PO/subunit OSCP. ATP synthase complex consists of a soluble F(1) head domain (subunits alpha(3) and beta(3)) - the catalytic core - and a membrane F(0) domain - the membrane proton channel (subunits c, a, 8, e, f, g, k and j). These two domains are linked by a central stalk (subunits gamma, delta, and epsilon) rotating inside the F1 region and a stationary peripheral stalk (subunits F6, b, d, and OSCP). Interacts with PRICKLE3.

Its subcellular location is the mitochondrion membrane. In terms of biological role, subunit 8, of the mitochondrial membrane ATP synthase complex (F(1)F(0) ATP synthase or Complex V) that produces ATP from ADP in the presence of a proton gradient across the membrane which is generated by electron transport complexes of the respiratory chain. ATP synthase complex consist of a soluble F(1) head domain - the catalytic core - and a membrane F(1) domain - the membrane proton channel. These two domains are linked by a central stalk rotating inside the F(1) region and a stationary peripheral stalk. During catalysis, ATP synthesis in the catalytic domain of F(1) is coupled via a rotary mechanism of the central stalk subunits to proton translocation. In vivo, can only synthesize ATP although its ATP hydrolase activity can be activated artificially in vitro. Part of the complex F(0) domain. This is ATP synthase F(0) complex subunit 8 from Equus caballus (Horse).